An 805-amino-acid chain; its full sequence is Angiotensin-converting enzyme 2 (805 aa).

Residues 1 to 17 form the signal peptide; it reads MSGSFWLLLSFAALTAA. Topologically, residues 18–740 are extracellular; the sequence is QSTTEELAKT…LSPPYRPPVT (723 aa). The 589-residue stretch at 19 to 607 folds into the Peptidase M2 domain; it reads STTEELAKTF…QNRNSFVGWD (589 aa). An interaction with SARS S protein region spans residues 30–41; the sequence is ETFNYEAQELSY. N-linked (GlcNAc...) asparagine glycosylation is present at Asn53. 2 interaction with SARS S protein regions span residues 82-84 and 90-93; these read TYP and DAKI. Cys133 and Cys141 are disulfide-bonded. Arg169 is a chloride binding site. Asn216 is a glycosylation site (N-linked (GlcNAc...) asparagine). Arg273 lines the substrate pocket. Residue Asn322 is glycosylated (N-linked (GlcNAc...) asparagine). A disulfide bridge connects residues Cys344 and Cys361. 345–346 lines the substrate pocket; sequence HP. Residues 353 to 357 are interaction with SARS S protein; that stretch reads KGDFR. Residue His374 coordinates Zn(2+). Catalysis depends on Glu375, which acts as the Proton acceptor. Residues His378 and Glu402 each contribute to the Zn(2+) site. Chloride-binding residues include Trp477 and Lys481. The active-site Proton donor is the His505. Tyr515 is a substrate binding site. A disulfide bridge links Cys530 with Cys542. Asn546 carries N-linked (GlcNAc...) asparagine glycosylation. The region spanning 614 to 805 is the Collectrin-like domain; the sequence is SDQSIKVRIS…QHADDVQTSF (192 aa). The segment at 652–659 is essential for cleavage by ADAM17; the sequence is REYFSKVK. Asn660 and Asn690 each carry an N-linked (GlcNAc...) asparagine glycan. Positions 697–716 are essential for cleavage by TMPRSS11D and TMPRSS2; sequence RSEVEDAIRMSRSRINDAFR. Residues 741 to 761 traverse the membrane as a helical segment; that stretch reads IWLIVFGVVMGAIVVGIVLLI. The Cytoplasmic portion of the chain corresponds to 762–805; that stretch reads VSGIRNRRKNDQAGSEENPYASVDLNKGENNPGFQHADDVQTSF. Positions 771-805 are disordered; sequence NDQAGSEENPYASVDLNKGENNPGFQHADDVQTSF. The LIR signature appears at 778–786; that stretch reads ENPYASVDL. Residue Tyr781 is modified to Phosphotyrosine. The short motif at 781-784 is the Endocytic sorting signal element; that stretch reads YASV. An SH2-binding motif is present at residues 781 to 785; it reads YASVD. Residue Ser783 is modified to Phosphoserine. A PTB motif is present at residues 792–795; the sequence is NPGF. Residues 803-805 carry the PDZ-binding motif; the sequence is TSF.

The protein belongs to the peptidase M2 family. Homodimer. Interacts with the catalytically active form of TMPRSS2. Interacts with SLC6A19; this interaction is essential for expression and function of SLC6A19 in intestine. Interacts with ITGA5:ITGB1. Probably interacts (via endocytic sorting signal motif) with AP2M1; the interaction is inhibited by phosphorylation of Tyr-781. Interacts (via PDZ-binding motif) with NHERF1 (via PDZ domains); the interaction may enhance ACE2 membrane residence. As to quaternary structure, (Microbial infection) Interacts with SARS-CoV S protein. Zn(2+) serves as cofactor. It depends on chloride as a cofactor. Proteolytic cleavage by ADAM17 generates a secreted form. Also cleaved by serine proteases: TMPRSS2, TMPRSS11D and HPN/TMPRSS1. Post-translationally, phosphorylated. Phosphorylation at Tyr-781 probably inhibits interaction with AP2M1 and enables interactions with proteins containing SH2 domains.

The protein localises to the secreted. Its subcellular location is the cell membrane. It is found in the cytoplasm. It localises to the cell projection. The protein resides in the cilium. The protein localises to the apical cell membrane. The enzyme catalyses angiotensin II + H2O = angiotensin-(1-7) + L-phenylalanine. The catalysed reaction is angiotensin I + H2O = angiotensin-(1-9) + L-leucine. Essential counter-regulatory carboxypeptidase of the renin-angiotensin hormone system that is a critical regulator of blood volume, systemic vascular resistance, and thus cardiovascular homeostasis. Converts angiotensin I to angiotensin 1-9, a nine-amino acid peptide with anti-hypertrophic effects in cardiomyocytes, and angiotensin II to angiotensin 1-7, which then acts as a beneficial vasodilator and anti-proliferation agent, counterbalancing the actions of the vasoconstrictor angiotensin II. Also removes the C-terminal residue from three other vasoactive peptides, neurotensin, kinetensin, and des-Arg bradykinin, but is not active on bradykinin. Also cleaves other biological peptides, such as apelins, casomorphins and dynorphin A. Plays an important role in amino acid transport by acting as binding partner of amino acid transporter SLC6A19 in intestine, regulating trafficking, expression on the cell surface, and its catalytic activity. Functionally, (Microbial infection) Acts as a receptor for human coronavirus SARS. The sequence is that of Angiotensin-converting enzyme 2 (ACE2) from Paguma larvata (Masked palm civet).